The sequence spans 1127 residues: Ras guanine nucleotide exchange factor F (1127 aa).

2 disordered regions span residues 1 to 82 (MTDK…SLLN) and 96 to 154 (NSGG…SSSS). Composition is skewed to low complexity over residues 23–53 (NQPS…TTSP) and 67–82 (NNNN…SLLN). The segment covering 122–132 (RTSTTLAQFSG) has biased composition (polar residues). The span at 133-154 (SSLPNTENSSPPPSSSLISSSS) shows a compositional bias: low complexity. 5 Kelch repeats span residues 212–261 (GFYL…LYNN), 262–311 (SMYI…VESG), 313–366 (MIVF…MHKG), 367–418 (NMYV…LFQD), and 420–469 (IFIS…VKGN). One can recognise a LisH domain in the interval 557-589 (SHQFVLQLIMEYLERNTYHKVIAAIQKESGVLH). Positions 673 to 804 (NKVQIKAATF…KLRELKKKLQ (132 aa)) constitute an N-terminal Ras-GEF domain. The region spanning 835-1062 (DELEIARQMT…YDLNLLSESL (228 aa)) is the Ras-GEF domain. The tract at residues 1090–1127 (LGSARELNNSNRDSNNITGSSSNNNSNSSNSLSPIVKL) is disordered. Residues 1103-1127 (SNNITGSSSNNNSNSSNSLSPIVKL) show a composition bias toward low complexity.

In terms of biological role, promotes the exchange of Ras-bound GDP by GTP. This Dictyostelium discoideum (Social amoeba) protein is Ras guanine nucleotide exchange factor F (gefF).